The sequence spans 202 residues: Imidazoleglycerol-phosphate dehydratase (202 aa).

This sequence belongs to the imidazoleglycerol-phosphate dehydratase family.

Its subcellular location is the cytoplasm. The catalysed reaction is D-erythro-1-(imidazol-4-yl)glycerol 3-phosphate = 3-(imidazol-4-yl)-2-oxopropyl phosphate + H2O. It participates in amino-acid biosynthesis; L-histidine biosynthesis; L-histidine from 5-phospho-alpha-D-ribose 1-diphosphate: step 6/9. The chain is Imidazoleglycerol-phosphate dehydratase from Rhizobium johnstonii (strain DSM 114642 / LMG 32736 / 3841) (Rhizobium leguminosarum bv. viciae).